Reading from the N-terminus, the 454-residue chain is CCA-adding enzyme (454 aa).

Serine 59 and arginine 62 together coordinate ATP. Positions 59 and 62 each coordinate CTP. 3 residues coordinate Mg(2+): aspartate 71, aspartate 73, and aspartate 125. Residues histidine 148, lysine 167, and tyrosine 176 each coordinate ATP. Residues histidine 148, lysine 167, and tyrosine 176 each coordinate CTP.

This sequence belongs to the tRNA nucleotidyltransferase/poly(A) polymerase family. Archaeal CCA-adding enzyme subfamily. In terms of assembly, homodimer. The cofactor is Mg(2+).

It carries out the reaction a tRNA precursor + 2 CTP + ATP = a tRNA with a 3' CCA end + 3 diphosphate. The catalysed reaction is a tRNA with a 3' CCA end + 2 CTP + ATP = a tRNA with a 3' CCACCA end + 3 diphosphate. Functionally, catalyzes the addition and repair of the essential 3'-terminal CCA sequence in tRNAs without using a nucleic acid template. Adds these three nucleotides in the order of C, C, and A to the tRNA nucleotide-73, using CTP and ATP as substrates and producing inorganic pyrophosphate. tRNA 3'-terminal CCA addition is required both for tRNA processing and repair. Also involved in tRNA surveillance by mediating tandem CCA addition to generate a CCACCA at the 3' terminus of unstable tRNAs. While stable tRNAs receive only 3'-terminal CCA, unstable tRNAs are marked with CCACCA and rapidly degraded. This is CCA-adding enzyme from Methanosarcina acetivorans (strain ATCC 35395 / DSM 2834 / JCM 12185 / C2A).